The primary structure comprises 110 residues: Thioredoxin Asp f 29 (110 aa).

Residues 1–110 (MSHNVEKITD…LEAAIKAHVA (110 aa)) form the Thioredoxin domain. Catalysis depends on nucleophile residues Cys-34 and Cys-37. Residues Cys-34 and Cys-37 are joined by a disulfide bond.

The protein belongs to the thioredoxin family.

Participates in various redox reactions through the reversible oxidation of its active center dithiol to a disulfide and catalyzes dithiol-disulfide exchange reactions. This Aspergillus fumigatus (Neosartorya fumigata) protein is Thioredoxin Asp f 29.